A 169-amino-acid polypeptide reads, in one-letter code: Photosystem I assembly protein Ycf3 (169 aa).

TPR repeat units follow at residues 35–68 (AFTYYRDGMSAQSEGEYAEALQNYYEAMRLETDP), 72–105 (SYILYNIGLVHTSNGEHTKALEYYFQALERNPSL), and 120–153 (GEQAIRQGDPETAEAWFDQAAEYWEQAIALAPGN).

The protein belongs to the Ycf3 family.

Its subcellular location is the plastid. The protein resides in the chloroplast thylakoid membrane. Essential for the assembly of the photosystem I (PSI) complex. May act as a chaperone-like factor to guide the assembly of the PSI subunits. The polypeptide is Photosystem I assembly protein Ycf3 (Pinus koraiensis (Korean pine)).